A 76-amino-acid chain; its full sequence is cAMP-dependent protein kinase inhibitor alpha (76 aa).

Thr2 carries the blocked amino end (Thr) modification. The disordered stretch occupies residues Lys49–Ser76.

This sequence belongs to the PKI family.

In terms of biological role, extremely potent competitive inhibitor of cAMP-dependent protein kinase activity, this protein interacts with the catalytic subunit of the enzyme after the cAMP-induced dissociation of its regulatory chains. The protein is cAMP-dependent protein kinase inhibitor alpha (PKIA) of Gallus gallus (Chicken).